Consider the following 447-residue polypeptide: SNF1-related protein kinase regulatory subunit gamma-1-like (447 aa).

Ala-2 is subject to N-acetylalanine. A Phosphoserine modification is found at Ser-35. 4 CBS domains span residues Gln-54 to Leu-120, Ser-214 to Trp-275, Met-292 to Phe-350, and Leu-374 to Phe-433.

It belongs to the 5'-AMP-activated protein kinase gamma subunit family. In terms of assembly, subunit of a probable heterotrimeric complex consisting of an alpha catalytic (KIN10 or KIN11) subunit, and a beta (KINB) and a gamma (KING or SNF4) non-catalytic regulatory subunits.

In terms of biological role, regulatory subunit of the probable trimeric SNF1-related protein kinase (SnRK) complex, which may play a role in a signal transduction cascade regulating gene expression and carbohydrate metabolism in higher plants. This is SNF1-related protein kinase regulatory subunit gamma-1-like (CBSCBS2) from Arabidopsis thaliana (Mouse-ear cress).